The sequence spans 199 residues: Recombination protein RecR (199 aa).

The segment at 58–73 (CRTCFSLSDQPECRIC) adopts a C4-type zinc-finger fold. Positions 81 to 176 (SIICVVEKPT…NVTRIASGVP (96 aa)) constitute a Toprim domain.

Belongs to the RecR family.

May play a role in DNA repair. It seems to be involved in an RecBC-independent recombinational process of DNA repair. It may act with RecF and RecO. The polypeptide is Recombination protein RecR (Desulforapulum autotrophicum (strain ATCC 43914 / DSM 3382 / VKM B-1955 / HRM2) (Desulfobacterium autotrophicum)).